The chain runs to 90 residues: Small cysteine-rich outer membrane protein OmcA (90 aa).

The signal sequence occupies residues 1–19; that stretch reads MKKAVLIAAMFCGVVSLSS. Cysteine 20 is lipidated: N-palmitoyl cysteine. A lipid anchor (S-diacylglycerol cysteine) is attached at cysteine 20. The interval 69–90 is disordered; the sequence is TECNSQSPQVKGCTSPDGRCKQ.

As to quaternary structure, part of a disulfide cross-linked outer membrane complex (COMC) composed of the major outer membrane porin (MOMP), the small cysteine-rich protein (OmcA) and the large cysteine-rich periplasmic protein (OmcB).

It localises to the cell outer membrane. In elementary bodies (EBs, the infectious stage, which is able to survive outside the host cell) provides the structural integrity of the outer envelope through disulfide cross-links with the large cysteine-rich periplasmic protein and the major outer membrane porin. It has been described in publications as the Sarkosyl-insoluble COMC (Chlamydia outer membrane complex), and serves as the functional equivalent of peptidoglycan. The chain is Small cysteine-rich outer membrane protein OmcA (omcA) from Chlamydia pneumoniae (Chlamydophila pneumoniae).